A 103-amino-acid polypeptide reads, in one-letter code: MAAVSLSVSTVKPLGDRVFVKVSESEEKTAGGILLPDTAKEKPQVGEVVQVGPGKANEDGSRQAPEVGVGDKVLYSKYAGTDIKLGSDEYVLLSEKDILAVVN.

It belongs to the GroES chaperonin family. As to quaternary structure, heptamer of 7 subunits arranged in a ring. Interacts with the chaperonin GroEL.

It localises to the cytoplasm. In terms of biological role, together with the chaperonin GroEL, plays an essential role in assisting protein folding. The GroEL-GroES system forms a nano-cage that allows encapsulation of the non-native substrate proteins and provides a physical environment optimized to promote and accelerate protein folding. GroES binds to the apical surface of the GroEL ring, thereby capping the opening of the GroEL channel. This Synechococcus sp. (strain WH7803) protein is Co-chaperonin GroES.